The following is a 434-amino-acid chain: 3-ketoacyl-CoA thiolase A, peroxisomal (434 aa).

Residues 1-36 constitute a peroxisome transit peptide; the sequence is MSESVGRTSAMHRLQVVLGHLAGRPESSSALQAAPC. Residues 11–36 are PTS2-type peroxisomal targeting signal; that stretch reads MHRLQVVLGHLAGRPESSSALQAAPC. Residue Cys-133 is the Acyl-thioester intermediate of the active site. N6-acetyllysine is present on residues Lys-183 and Lys-244. Active-site proton acceptor residues include His-387 and Cys-418.

The protein belongs to the thiolase-like superfamily. Thiolase family. Homodimer. Interacts (via PTS2-type peroxisomal targeting signal region) with PEX7; leading to its translocation into peroxisomes.

It is found in the peroxisome. It catalyses the reaction an acyl-CoA + acetyl-CoA = a 3-oxoacyl-CoA + CoA. It carries out the reaction 2 acetyl-CoA = acetoacetyl-CoA + CoA. The catalysed reaction is tetradecanoyl-CoA + acetyl-CoA = 3-oxohexadecanoyl-CoA + CoA. The enzyme catalyses hexanoyl-CoA + acetyl-CoA = 3-oxooctanoyl-CoA + CoA. It catalyses the reaction 3-oxohexadecanedioyl-CoA + CoA = tetradecanedioyl-CoA + acetyl-CoA. It carries out the reaction 3-oxo-(6Z,9Z,12Z,15Z,18Z,21Z)-tetracosahexaenoyl-CoA + CoA = (4Z,7Z,10Z,13Z,16Z,19Z)-docosahexaenoyl-CoA + acetyl-CoA. It participates in lipid metabolism; peroxisomal fatty acid beta-oxidation. In terms of biological role, responsible for the thiolytic cleavage of straight chain 3-keto fatty acyl-CoAs (3-oxoacyl-CoAs). Plays an important role in fatty acid peroxisomal beta-oxidation. Catalyzes the cleavage of short, medium, long, and very long straight chain 3-oxoacyl-CoAs. Medium chain straight 3-oxoacyl-CoAs are preferred substrates. This Rattus norvegicus (Rat) protein is 3-ketoacyl-CoA thiolase A, peroxisomal.